Reading from the N-terminus, the 429-residue chain is UDP-N-acetylglucosamine 1-carboxyvinyltransferase (429 aa).

22–23 lines the phosphoenolpyruvate pocket; sequence KN. UDP-N-acetyl-alpha-D-glucosamine is bound at residue Arg-102. The active-site Proton donor is the Cys-126. Cys-126 is modified (2-(S-cysteinyl)pyruvic acid O-phosphothioketal). UDP-N-acetyl-alpha-D-glucosamine is bound by residues 131 to 135, Asp-316, and Ile-338; that span reads RPVDL.

This sequence belongs to the EPSP synthase family. MurA subfamily.

The protein localises to the cytoplasm. It carries out the reaction phosphoenolpyruvate + UDP-N-acetyl-alpha-D-glucosamine = UDP-N-acetyl-3-O-(1-carboxyvinyl)-alpha-D-glucosamine + phosphate. It functions in the pathway cell wall biogenesis; peptidoglycan biosynthesis. In terms of biological role, cell wall formation. Adds enolpyruvyl to UDP-N-acetylglucosamine. This is UDP-N-acetylglucosamine 1-carboxyvinyltransferase from Methylorubrum populi (strain ATCC BAA-705 / NCIMB 13946 / BJ001) (Methylobacterium populi).